A 426-amino-acid chain; its full sequence is Serine hydroxymethyltransferase (426 aa).

(6S)-5,6,7,8-tetrahydrofolate-binding positions include leucine 118 and 122–124 (GHL). Lysine 227 carries the post-translational modification N6-(pyridoxal phosphate)lysine.

The protein belongs to the SHMT family. In terms of assembly, homodimer. Pyridoxal 5'-phosphate serves as cofactor.

The protein resides in the cytoplasm. It catalyses the reaction (6R)-5,10-methylene-5,6,7,8-tetrahydrofolate + glycine + H2O = (6S)-5,6,7,8-tetrahydrofolate + L-serine. It functions in the pathway one-carbon metabolism; tetrahydrofolate interconversion. Its pathway is amino-acid biosynthesis; glycine biosynthesis; glycine from L-serine: step 1/1. Functionally, catalyzes the reversible interconversion of serine and glycine with tetrahydrofolate (THF) serving as the one-carbon carrier. This reaction serves as the major source of one-carbon groups required for the biosynthesis of purines, thymidylate, methionine, and other important biomolecules. Also exhibits THF-independent aldolase activity toward beta-hydroxyamino acids, producing glycine and aldehydes, via a retro-aldol mechanism. This is Serine hydroxymethyltransferase from Mycobacterium avium (strain 104).